The chain runs to 211 residues: Uracil phosphoribosyltransferase (211 aa).

5-phospho-alpha-D-ribose 1-diphosphate-binding positions include Arg79, Arg104, and Asp131–Ser139. Residues Ile196 and Gly201 to Ala203 contribute to the uracil site. Asp202 contacts 5-phospho-alpha-D-ribose 1-diphosphate.

Belongs to the UPRTase family. Requires Mg(2+) as cofactor.

The enzyme catalyses UMP + diphosphate = 5-phospho-alpha-D-ribose 1-diphosphate + uracil. The protein operates within pyrimidine metabolism; UMP biosynthesis via salvage pathway; UMP from uracil: step 1/1. With respect to regulation, allosterically activated by GTP. In terms of biological role, catalyzes the conversion of uracil and 5-phospho-alpha-D-ribose 1-diphosphate (PRPP) to UMP and diphosphate. The polypeptide is Uracil phosphoribosyltransferase (Lactococcus lactis subsp. cremoris (strain MG1363)).